The following is a 226-amino-acid chain: DNA mismatch repair protein MutH (226 aa).

Belongs to the MutH family.

The protein resides in the cytoplasm. Functionally, sequence-specific endonuclease that cleaves unmethylated GATC sequences. It is involved in DNA mismatch repair. This chain is DNA mismatch repair protein MutH, found in Vibrio campbellii (strain ATCC BAA-1116).